A 385-amino-acid polypeptide reads, in one-letter code: tRNA-specific 2-thiouridylase MnmA (385 aa).

Residues 27–34 (AMSGGVDS) and L53 contribute to the ATP site. Catalysis depends on C121, which acts as the Nucleophile. C121 and C217 are disulfide-bonded. G145 is a binding site for ATP. The interval 167–169 (KDQ) is interaction with tRNA. C217 functions as the Cysteine persulfide intermediate in the catalytic mechanism.

It belongs to the MnmA/TRMU family.

It is found in the cytoplasm. It catalyses the reaction S-sulfanyl-L-cysteinyl-[protein] + uridine(34) in tRNA + AH2 + ATP = 2-thiouridine(34) in tRNA + L-cysteinyl-[protein] + A + AMP + diphosphate + H(+). Functionally, catalyzes the 2-thiolation of uridine at the wobble position (U34) of tRNA, leading to the formation of s(2)U34. The protein is tRNA-specific 2-thiouridylase MnmA of Sorangium cellulosum (strain So ce56) (Polyangium cellulosum (strain So ce56)).